Consider the following 303-residue polypeptide: Paired immunoglobulin-like type 2 receptor alpha (303 aa).

Residues 1–19 form the signal peptide; that stretch reads MGRPLLLPLLPLLLPPAFL. At 20-197 the chain is on the extracellular side; sequence QPSGSTGSGP…DSWHISLETA (178 aa). The 119-residue stretch at 32 to 150 folds into the Ig-like V-type domain; it reads LYGVTQPKHL…SIEGTKLSIT (119 aa). An N-linked (GlcNAc...) asparagine glycan is attached at N100. Residues 198–218 form a helical membrane-spanning segment; sequence VGVAVAVTVLGIMILGLICLL. Topologically, residues 219–303 are cytoplasmic; the sequence is RWRRRKGQQR…NETLYSVLKA (85 aa). The tract at residues 226–296 is disordered; the sequence is QQRTKATTPA…RPLKSPQNET (71 aa). 2 short sequence motifs (ITIM motif) span residues 267–272 and 296–301; these read IVYASL and TLYSVL.

As to quaternary structure, monomer. Interacts with PTPN6/SHP-1 and PTPN11/SHP-2 upon tyrosine phosphorylation. In terms of assembly, (Microbial infection) Interacts with herpes simplex virus 1 glycoprotein B. In terms of processing, according to PubMed:10660620, N- and O-glycosylated. According to PubMed:10903717, only N-glycosylated. Phosphorylated on tyrosine residues. Predominantly detected in hemopoietic tissues and is expressed by monocytes, macrophages, and granulocytes, but not by lymphocytes. Also strongly expressed by dendritic cells (DC); preferentially by CD14+/CD1a- DC derived from CD34+ progenitors. Also expressed by CD11c+ blood and tonsil DC, but not by CD11c- DC precursors.

The protein localises to the cell membrane. Its subcellular location is the secreted. In terms of biological role, paired receptors consist of highly related activating and inhibitory receptors and are widely involved in the regulation of the immune system. PILRA is thought to act as a cellular signaling inhibitory receptor by recruiting cytoplasmic phosphatases like PTPN6/SHP-1 and PTPN11/SHP-2 via their SH2 domains that block signal transduction through dephosphorylation of signaling molecules. Receptor for PIANP. (Microbial infection) Acts as an entry co-receptor for herpes simplex virus 1. This chain is Paired immunoglobulin-like type 2 receptor alpha (PILRA), found in Homo sapiens (Human).